A 101-amino-acid chain; its full sequence is Large ribosomal subunit protein uL23 (101 aa).

This sequence belongs to the universal ribosomal protein uL23 family. Part of the 50S ribosomal subunit. Contacts protein L29, and trigger factor when it is bound to the ribosome.

Its function is as follows. One of the early assembly proteins it binds 23S rRNA. One of the proteins that surrounds the polypeptide exit tunnel on the outside of the ribosome. Forms the main docking site for trigger factor binding to the ribosome. The chain is Large ribosomal subunit protein uL23 from Aromatoleum aromaticum (strain DSM 19018 / LMG 30748 / EbN1) (Azoarcus sp. (strain EbN1)).